A 211-amino-acid chain; its full sequence is Arginine exporter protein ArgO (211 aa).

Transmembrane regions (helical) follow at residues 1 to 21 (MISY…PLGP), 37 to 57 (LMIA…GIFG), 68 to 88 (LLAL…FGAL), 111 to 131 (IIAT…DTFV), 147 to 167 (WFAL…ALLA), and 179 to 199 (AQRI…FQLA).

Belongs to the LysE/ArgO transporter (TC 2.A.75) family.

Its subcellular location is the cell inner membrane. It carries out the reaction L-arginine(in) = L-arginine(out). Functionally, involved in the export of arginine. Important to control the intracellular level of arginine and the correct balance between arginine and lysine. The protein is Arginine exporter protein ArgO of Salmonella newport (strain SL254).